We begin with the raw amino-acid sequence, 968 residues long: Glycine dehydrogenase (decarboxylating) (968 aa).

Lysine 713 carries the post-translational modification N6-(pyridoxal phosphate)lysine.

The protein belongs to the GcvP family. As to quaternary structure, the glycine cleavage system is composed of four proteins: P, T, L and H. The cofactor is pyridoxal 5'-phosphate.

The enzyme catalyses N(6)-[(R)-lipoyl]-L-lysyl-[glycine-cleavage complex H protein] + glycine + H(+) = N(6)-[(R)-S(8)-aminomethyldihydrolipoyl]-L-lysyl-[glycine-cleavage complex H protein] + CO2. Functionally, the glycine cleavage system catalyzes the degradation of glycine. The P protein binds the alpha-amino group of glycine through its pyridoxal phosphate cofactor; CO(2) is released and the remaining methylamine moiety is then transferred to the lipoamide cofactor of the H protein. In Variovorax paradoxus (strain S110), this protein is Glycine dehydrogenase (decarboxylating).